We begin with the raw amino-acid sequence, 278 residues long: Pantothenate synthetase (278 aa).

27 to 34 contributes to the ATP binding site; the sequence is MGNLHEGH. Residue histidine 34 is the Proton donor of the active site. Glutamine 58 serves as a coordination point for (R)-pantoate. Glutamine 58 lines the beta-alanine pocket. Residue 147-150 coordinates ATP; it reads GEKD. Glutamine 153 is a (R)-pantoate binding site. 184–187 lines the ATP pocket; the sequence is YSSR.

Belongs to the pantothenate synthetase family. Homodimer.

It is found in the cytoplasm. It carries out the reaction (R)-pantoate + beta-alanine + ATP = (R)-pantothenate + AMP + diphosphate + H(+). The protein operates within cofactor biosynthesis; (R)-pantothenate biosynthesis; (R)-pantothenate from (R)-pantoate and beta-alanine: step 1/1. Catalyzes the condensation of pantoate with beta-alanine in an ATP-dependent reaction via a pantoyl-adenylate intermediate. The sequence is that of Pantothenate synthetase from Acidithiobacillus ferrooxidans (strain ATCC 23270 / DSM 14882 / CIP 104768 / NCIMB 8455) (Ferrobacillus ferrooxidans (strain ATCC 23270)).